A 664-amino-acid polypeptide reads, in one-letter code: Degenerin del-1 (664 aa).

Residues M1–R67 are Cytoplasmic-facing. A helical membrane pass occupies residues F68–V88. Residues K89–G607 are Extracellular-facing. N-linked (GlcNAc...) asparagine glycans are attached at residues N241, N300, N394, N508, and N562. Residues Q608–V628 form a helical membrane-spanning segment. At R629–N664 the chain is on the cytoplasmic side.

The protein belongs to the amiloride-sensitive sodium channel (TC 1.A.6) family.

It localises to the membrane. Its function is as follows. Probable sodium channel subunit. The protein is Degenerin del-1 (del-1) of Caenorhabditis elegans.